Reading from the N-terminus, the 204-residue chain is Holliday junction branch migration complex subunit RuvA (204 aa).

The tract at residues 1–64 (MIAQIRGKLI…QDSILLVGFC (64 aa)) is domain I. The interval 65 to 143 (TENEKQLFKL…GWTSKEQITF (79 aa)) is domain II. Positions 144–154 (INNKKDAIDQS) are flexible linker. The domain III stretch occupies residues 154–204 (SVMEEDAISALINLGYKSQAAKDAIDRVISEGGENKSLDVILKKALKVLAM).

This sequence belongs to the RuvA family. As to quaternary structure, homotetramer. Forms an RuvA(8)-RuvB(12)-Holliday junction (HJ) complex. HJ DNA is sandwiched between 2 RuvA tetramers; dsDNA enters through RuvA and exits via RuvB. An RuvB hexamer assembles on each DNA strand where it exits the tetramer. Each RuvB hexamer is contacted by two RuvA subunits (via domain III) on 2 adjacent RuvB subunits; this complex drives branch migration. In the full resolvosome a probable DNA-RuvA(4)-RuvB(12)-RuvC(2) complex forms which resolves the HJ.

Its subcellular location is the cytoplasm. In terms of biological role, the RuvA-RuvB-RuvC complex processes Holliday junction (HJ) DNA during genetic recombination and DNA repair, while the RuvA-RuvB complex plays an important role in the rescue of blocked DNA replication forks via replication fork reversal (RFR). RuvA specifically binds to HJ cruciform DNA, conferring on it an open structure. The RuvB hexamer acts as an ATP-dependent pump, pulling dsDNA into and through the RuvAB complex. HJ branch migration allows RuvC to scan DNA until it finds its consensus sequence, where it cleaves and resolves the cruciform DNA. The chain is Holliday junction branch migration complex subunit RuvA from Syntrophus aciditrophicus (strain SB).